A 652-amino-acid chain; its full sequence is Oligopeptide-binding protein AliB (652 aa).

The signal sequence occupies residues 1 to 24 (MKKSKSKYLTLAGLVLGTGVLLSA). The N-palmitoyl cysteine moiety is linked to residue Cys25. Cys25 carries S-diacylglycerol cysteine lipidation.

This sequence belongs to the bacterial solute-binding protein 5 family.

The protein localises to the cell membrane. In terms of biological role, part of the binding-protein-dependent transport system for oligopeptides; probably an oligopeptide binding protein. The chain is Oligopeptide-binding protein AliB (aliB) from Streptococcus pneumoniae serotype 4 (strain ATCC BAA-334 / TIGR4).